The sequence spans 259 residues: Haloacid dehalogenase-like hydrolase domain-containing protein 2 (259 aa).

Mg(2+)-binding residues include Asp13 and Asn15. Substrate is bound by residues 13 to 15 (DLN) and 46 to 47 (TN). Positions 47-72 (NTTKESKKDLLERLKKLEFEISEDEI) form a coiled coil. The residue at position 50 (Lys50) is an N6-succinyllysine. Lys179 is a substrate binding site. Asp204 contacts Mg(2+).

This sequence belongs to the HAD-like hydrolase superfamily. Requires Mg(2+) as cofactor.

The chain is Haloacid dehalogenase-like hydrolase domain-containing protein 2 (Hdhd2) from Mus musculus (Mouse).